The primary structure comprises 61 residues: UPF0181 protein KPN78578_22920 (61 aa).

This sequence belongs to the UPF0181 family.

The chain is UPF0181 protein KPN78578_22920 from Klebsiella pneumoniae subsp. pneumoniae (strain ATCC 700721 / MGH 78578).